The primary structure comprises 303 residues: Pseudouridine-5'-phosphate glycosidase (303 aa).

Catalysis depends on E23, which acts as the Proton donor. Substrate is bound by residues K85 and V105. D137 is a Mn(2+) binding site. 139 to 141 (SQD) provides a ligand contact to substrate. K158 acts as the Nucleophile in catalysis.

This sequence belongs to the pseudouridine-5'-phosphate glycosidase family. In terms of assembly, homotrimer. Mn(2+) is required as a cofactor.

It carries out the reaction D-ribose 5-phosphate + uracil = psi-UMP + H2O. In terms of biological role, catalyzes the reversible cleavage of pseudouridine 5'-phosphate (PsiMP) to ribose 5-phosphate and uracil. Functions biologically in the cleavage direction, as part of a pseudouridine degradation pathway. This is Pseudouridine-5'-phosphate glycosidase from Myxococcus xanthus (strain DK1622).